We begin with the raw amino-acid sequence, 418 residues long: 3-isopropylmalate dehydratase large subunit (418 aa).

[4Fe-4S] cluster contacts are provided by cysteine 298, cysteine 358, and cysteine 361.

This sequence belongs to the aconitase/IPM isomerase family. LeuC type 2 subfamily. Heterodimer of LeuC and LeuD. [4Fe-4S] cluster serves as cofactor.

The catalysed reaction is (2R,3S)-3-isopropylmalate = (2S)-2-isopropylmalate. It functions in the pathway amino-acid biosynthesis; L-leucine biosynthesis; L-leucine from 3-methyl-2-oxobutanoate: step 2/4. Its function is as follows. Catalyzes the isomerization between 2-isopropylmalate and 3-isopropylmalate, via the formation of 2-isopropylmaleate. The polypeptide is 3-isopropylmalate dehydratase large subunit (Thermoanaerobacter sp. (strain X514)).